We begin with the raw amino-acid sequence, 414 residues long: Serine hydroxymethyltransferase (414 aa).

(6S)-5,6,7,8-tetrahydrofolate contacts are provided by residues leucine 121 and 125 to 127; that span reads GHL. Lysine 229 is modified (N6-(pyridoxal phosphate)lysine).

It belongs to the SHMT family. In terms of assembly, homodimer. Requires pyridoxal 5'-phosphate as cofactor.

Its subcellular location is the cytoplasm. The catalysed reaction is (6R)-5,10-methylene-5,6,7,8-tetrahydrofolate + glycine + H2O = (6S)-5,6,7,8-tetrahydrofolate + L-serine. Its pathway is one-carbon metabolism; tetrahydrofolate interconversion. The protein operates within amino-acid biosynthesis; glycine biosynthesis; glycine from L-serine: step 1/1. Functionally, catalyzes the reversible interconversion of serine and glycine with tetrahydrofolate (THF) serving as the one-carbon carrier. This reaction serves as the major source of one-carbon groups required for the biosynthesis of purines, thymidylate, methionine, and other important biomolecules. Also exhibits THF-independent aldolase activity toward beta-hydroxyamino acids, producing glycine and aldehydes, via a retro-aldol mechanism. The sequence is that of Serine hydroxymethyltransferase from Polaromonas sp. (strain JS666 / ATCC BAA-500).